Here is a 512-residue protein sequence, read N- to C-terminus: Dihydroniloticin synthase CYP71CD1 (512 aa).

The chain crosses the membrane as a helical span at residues 7 to 27 (YFTVTSLLVFLTFLLRLVWGW). Cysteine 451 serves as a coordination point for heme.

This sequence belongs to the cytochrome P450 family. Heme is required as a cofactor. Accumulates in mature fruits and in juice vesicles.

The protein resides in the membrane. The enzyme catalyses tirucalla-7,24-dien-3beta-ol + 2 reduced [NADPH--hemoprotein reductase] + 2 O2 = dihydroniloticin + 2 oxidized [NADPH--hemoprotein reductase] + 2 H2O + 2 H(+). Its pathway is secondary metabolite biosynthesis; terpenoid biosynthesis. Monooxygenase involved in the biosynthesis of limonoids triterpene natural products such as limonin, a compound with insecticidal activity responsible for the bitter taste in citrus. Catalyzes the conversion of tirucalladienol to dihydroniloticin. In Citrus sinensis (Sweet orange), this protein is Dihydroniloticin synthase CYP71CD1.